The sequence spans 356 residues: tRNA N6-adenosine threonylcarbamoyltransferase (356 aa).

A divalent metal cation-binding residues include His-122, His-126, and Tyr-143. Residues 143 to 147, Asp-175, Gly-190, Glu-194, and Asn-287 each bind substrate; that span reads YVSGG. Asp-315 is a binding site for a divalent metal cation.

This sequence belongs to the KAE1 / TsaD family. As to quaternary structure, component of the EKC/KEOPS complex composed of at least BUD32, CGI121, GON7, KAE1 and PCC1; the whole complex dimerizes. It depends on a divalent metal cation as a cofactor.

The protein resides in the cytoplasm. It localises to the nucleus. It catalyses the reaction L-threonylcarbamoyladenylate + adenosine(37) in tRNA = N(6)-L-threonylcarbamoyladenosine(37) in tRNA + AMP + H(+). In terms of biological role, component of the EKC/KEOPS complex that is required for the formation of a threonylcarbamoyl group on adenosine at position 37 (t(6)A37) in tRNAs that read codons beginning with adenine. The complex is probably involved in the transfer of the threonylcarbamoyl moiety of threonylcarbamoyl-AMP (TC-AMP) to the N6 group of A37. KAE1 likely plays a direct catalytic role in this reaction, but requires other protein(s) of the complex to fulfill this activity. The EKC/KEOPS complex also promotes both telomere uncapping and telomere elongation. The complex is required for efficient recruitment of transcriptional coactivators. The protein is tRNA N6-adenosine threonylcarbamoyltransferase of Chaetomium globosum (strain ATCC 6205 / CBS 148.51 / DSM 1962 / NBRC 6347 / NRRL 1970) (Soil fungus).